The sequence spans 244 residues: Probable transcriptional regulatory protein DMR_30850 (244 aa).

The protein belongs to the TACO1 family.

It is found in the cytoplasm. This Solidesulfovibrio magneticus (strain ATCC 700980 / DSM 13731 / RS-1) (Desulfovibrio magneticus) protein is Probable transcriptional regulatory protein DMR_30850.